A 185-amino-acid chain; its full sequence is MVKMSKQLRIAAPVEPVVVGKMGSAYGIRGWLRVFSSTEEAESIFDYQPWFIKRAREWQPIGLESWKRHNQDLIIKVRDIEDREAATLLTNCEIVVDASQLPDLDSGEYYWKDLLGCQVVTVGGYQLGEVIDLMETGSNDVLVVKANLKDAFGIQERLIPFLDGKVIKNVDLAAHIIEVDWDPGF.

The 80-residue stretch at 106 to 185 folds into the PRC barrel domain; that stretch reads SGEYYWKDLL…IIEVDWDPGF (80 aa).

It belongs to the RimM family. As to quaternary structure, binds ribosomal protein uS19.

It localises to the cytoplasm. In terms of biological role, an accessory protein needed during the final step in the assembly of 30S ribosomal subunit, possibly for assembly of the head region. Essential for efficient processing of 16S rRNA. May be needed both before and after RbfA during the maturation of 16S rRNA. It has affinity for free ribosomal 30S subunits but not for 70S ribosomes. The chain is Ribosome maturation factor RimM from Sodalis glossinidius (strain morsitans).